The sequence spans 474 residues: PRAME family member 14 (474 aa).

5 LRR repeats span residues 15–38 (QSLL…LYLP), 204–229 (LNSI…CYLK), 271–294 (LLKI…LQNP), 319–342 (LGYL…PLGA), and 391–414 (MGAL…TYPA).

It belongs to the PRAME family.

The chain is PRAME family member 14 from Homo sapiens (Human).